Here is a 211-residue protein sequence, read N- to C-terminus: Small ribosomal subunit protein uS3 (211 aa).

The KH type-2 domain maps to 16 to 85 (IDEYFKTKLV…NPQIEVKQVE (70 aa)).

It belongs to the universal ribosomal protein uS3 family. In terms of assembly, part of the 30S ribosomal subunit.

In terms of biological role, binds the lower part of the 30S subunit head. The chain is Small ribosomal subunit protein uS3 from Methanococcus maripaludis (strain C7 / ATCC BAA-1331).